Here is a 198-residue protein sequence, read N- to C-terminus: Phage-like element PBSX protein XkdA (198 aa).

This sequence to B.subtilis YqaB.

This is Phage-like element PBSX protein XkdA (xkdA) from Bacillus subtilis (strain 168).